A 275-amino-acid chain; its full sequence is Subtilisin (275 aa).

Gln-2 provides a ligand contact to Ca(2+). Residues Pro-5 to Ala-274 enclose the Peptidase S8 domain. Asp-32 (charge relay system) is an active-site residue. A Ca(2+)-binding site is contributed by Asp-41. His-64 functions as the Charge relay system in the catalytic mechanism. 7 residues coordinate Ca(2+): Leu-75, Asn-77, Ile-79, Val-81, Ala-169, Tyr-171, and Thr-174. Ser-221 serves as the catalytic Charge relay system.

It belongs to the peptidase S8 family. Requires Ca(2+) as cofactor.

It is found in the secreted. The enzyme catalyses Hydrolysis of proteins with broad specificity for peptide bonds, and a preference for a large uncharged residue in P1. Hydrolyzes peptide amides.. Its function is as follows. Subtilisin is an extracellular alkaline serine protease, it catalyzes the hydrolysis of proteins and peptide amides. In Bacillus pumilus (Bacillus mesentericus), this protein is Subtilisin (apr).